Reading from the N-terminus, the 256-residue chain is Leucyl/phenylalanyl-tRNA--protein transferase (256 aa).

Residues 1–21 form a disordered region; sequence MIPWLPDDSDSAPFPPTRLAL.

Belongs to the L/F-transferase family.

The protein localises to the cytoplasm. The enzyme catalyses N-terminal L-lysyl-[protein] + L-leucyl-tRNA(Leu) = N-terminal L-leucyl-L-lysyl-[protein] + tRNA(Leu) + H(+). It carries out the reaction N-terminal L-arginyl-[protein] + L-leucyl-tRNA(Leu) = N-terminal L-leucyl-L-arginyl-[protein] + tRNA(Leu) + H(+). The catalysed reaction is L-phenylalanyl-tRNA(Phe) + an N-terminal L-alpha-aminoacyl-[protein] = an N-terminal L-phenylalanyl-L-alpha-aminoacyl-[protein] + tRNA(Phe). Its function is as follows. Functions in the N-end rule pathway of protein degradation where it conjugates Leu, Phe and, less efficiently, Met from aminoacyl-tRNAs to the N-termini of proteins containing an N-terminal arginine or lysine. The sequence is that of Leucyl/phenylalanyl-tRNA--protein transferase from Leptothrix cholodnii (strain ATCC 51168 / LMG 8142 / SP-6) (Leptothrix discophora (strain SP-6)).